Here is a 195-residue protein sequence, read N- to C-terminus: Holliday junction branch migration complex subunit RuvA (195 aa).

The interval 1-62 (MIEFVKGPVA…EDQQTLYGFR (62 aa)) is domain I. The domain II stretch occupies residues 63 to 141 (SRRERELFNK…ELAPDYVPNE (79 aa)). Positions 141 to 145 (EGLFA) are flexible linker. The tract at residues 146–195 (QGASELDEACEALVALGYSEREIAKVRKALSGEILTTDAYIKRALQLLLK) is domain III.

The protein belongs to the RuvA family. Homotetramer. Forms an RuvA(8)-RuvB(12)-Holliday junction (HJ) complex. HJ DNA is sandwiched between 2 RuvA tetramers; dsDNA enters through RuvA and exits via RuvB. An RuvB hexamer assembles on each DNA strand where it exits the tetramer. Each RuvB hexamer is contacted by two RuvA subunits (via domain III) on 2 adjacent RuvB subunits; this complex drives branch migration. In the full resolvosome a probable DNA-RuvA(4)-RuvB(12)-RuvC(2) complex forms which resolves the HJ.

Its subcellular location is the cytoplasm. Functionally, the RuvA-RuvB-RuvC complex processes Holliday junction (HJ) DNA during genetic recombination and DNA repair, while the RuvA-RuvB complex plays an important role in the rescue of blocked DNA replication forks via replication fork reversal (RFR). RuvA specifically binds to HJ cruciform DNA, conferring on it an open structure. The RuvB hexamer acts as an ATP-dependent pump, pulling dsDNA into and through the RuvAB complex. HJ branch migration allows RuvC to scan DNA until it finds its consensus sequence, where it cleaves and resolves the cruciform DNA. This Exiguobacterium sp. (strain ATCC BAA-1283 / AT1b) protein is Holliday junction branch migration complex subunit RuvA.